Consider the following 286-residue polypeptide: MSIISTKYLLQDAQANGYAVPAFNIHNAETIQAILEVCSEMRSPVILAGTPGTFKHIALEEIYALCSAYSTTYNMPLALHLDHHESLDDIRRKVHAGVRSAMIDGSHFPFAENVKLVKSVVDFCHSQDCSVEAELGRLGGVEDDMSVDAESAFLTDPQEAKRFVELTGVDSLAVAIGTAHGLYSKTPKIDFQRLAEIREVVDVPLVLHGASDVPDEFVRRTIELGVTKVNVATELKIAFAGAVKAWFAENPQGNDPRYYMRVGMDAMKEVVRNKINVCGSANRISA.

The Proton donor role is filled by Asp82. 2 residues coordinate Zn(2+): His83 and His180. Gly181 contacts dihydroxyacetone phosphate. His208 is a Zn(2+) binding site. Residues 209-211 (GAS) and 230-233 (NVAT) contribute to the dihydroxyacetone phosphate site.

This sequence belongs to the class II fructose-bisphosphate aldolase family. TagBP aldolase KbaY subfamily. As to quaternary structure, homotetramer. Forms a complex with KbaZ. Zn(2+) is required as a cofactor.

The catalysed reaction is D-tagatofuranose 1,6-bisphosphate = D-glyceraldehyde 3-phosphate + dihydroxyacetone phosphate. The protein operates within carbohydrate metabolism; D-tagatose 6-phosphate degradation; D-glyceraldehyde 3-phosphate and glycerone phosphate from D-tagatose 6-phosphate: step 2/2. Its function is as follows. Catalytic subunit of the tagatose-1,6-bisphosphate aldolase KbaYZ, which catalyzes the reversible aldol condensation of dihydroxyacetone phosphate (DHAP or glycerone-phosphate) with glyceraldehyde 3-phosphate (G3P) to produce tagatose 1,6-bisphosphate (TBP). Requires KbaZ subunit for full activity and stability. The sequence is that of D-tagatose-1,6-bisphosphate aldolase subunit KbaY from Escherichia coli O45:K1 (strain S88 / ExPEC).